The primary structure comprises 240 residues: Dihydromonapterin reductase (240 aa).

The active-site Proton acceptor is the tyrosine 152.

This sequence belongs to the short-chain dehydrogenases/reductases (SDR) family. FolM subfamily.

It carries out the reaction (6S)-5,6,7,8-tetrahydrofolate + NADP(+) = 7,8-dihydrofolate + NADPH + H(+). It catalyses the reaction 7,8-dihydromonapterin + NADPH + H(+) = 5,6,7,8-tetrahydromonapterin + NADP(+). Functionally, catalyzes the reduction of dihydromonapterin to tetrahydromonapterin. Also has lower activity with dihydrofolate. This is Dihydromonapterin reductase (folM) from Shigella sonnei (strain Ss046).